Here is an 822-residue protein sequence, read N- to C-terminus: uncharacterized protein (822 aa).

A disordered region spans residues 1–230 (MARGKRSTQR…NAAPLNKTDA (230 aa)). Serine 27 carries the post-translational modification Phosphoserine. Over residues 34–44 (SKAKKNKKKLN) the composition is skewed to basic residues. 3 positions are modified to phosphoserine: serine 47, serine 51, and serine 55. Tyrosine 57 carries the post-translational modification Phosphotyrosine. The segment covering 61–70 (PEDDEVDEEV) has biased composition (acidic residues). Positions 73–85 (VKKKPSKKSKKAK) are enriched in basic residues. Over residues 92-106 (FADEQSVEEEEEEDS) the composition is skewed to acidic residues. Phosphoserine is present on serine 97. Positions 111–121 (RKNKKSSKKAS) are enriched in basic residues. Acidic residues-rich tracts occupy residues 129–144 (LADD…EESE) and 163–172 (SEALDDGDIE). Phosphoserine occurs at positions 137 and 163. 2 consecutive ABC transporter domains span residues 276–519 (LQVE…VQLA) and 594–809 (IKFQ…AKER). ATP contacts are provided by residues 308 to 315 (APNGSGKS) and 627 to 634 (GPNGAGKT).

Belongs to the ABC transporter superfamily.

The protein resides in the cytoplasm. This is an uncharacterized protein from Schizosaccharomyces pombe (strain 972 / ATCC 24843) (Fission yeast).